Reading from the N-terminus, the 297-residue chain is Mitochondrial glycine transporter (297 aa).

Solcar repeat units lie at residues 5–81, 105–189, and 211–295; these read TGHL…MRTA, LSMY…LKHT, and TSTA…LIKH. 6 helical membrane-spanning segments follow: residues 8-33, 56-82, 111-136, 164-187, 215-241, and 270-288; these read LIGG…TRFQ, GTLP…RTAL, LVTG…VRYE, GFGP…EKLK, INST…KTRM, and GLSM…AWGI.

The protein belongs to the mitochondrial carrier (TC 2.A.29) family. SLC25A38 subfamily.

It localises to the mitochondrion inner membrane. The enzyme catalyses glycine(in) = glycine(out). Mitochondrial glycine transporter that imports glycine into the mitochondrial matrix. Plays an important role in providing glycine for the first enzymatic step in heme biosynthesis, the condensation of glycine with succinyl-CoA to produce 5-aminolevulinate (ALA) in the mitochondrial matrix. The sequence is that of Mitochondrial glycine transporter from Candida glabrata (strain ATCC 2001 / BCRC 20586 / JCM 3761 / NBRC 0622 / NRRL Y-65 / CBS 138) (Yeast).